The chain runs to 178 residues: Probable coatomer subunit zeta-B (178 aa).

This sequence belongs to the adaptor complexes small subunit family. In terms of assembly, oligomeric complex that consists of at least the alpha, beta, beta', gamma, delta, epsilon and zeta subunits.

It localises to the cytoplasm. Its subcellular location is the golgi apparatus membrane. It is found in the cytoplasmic vesicle. The protein localises to the COPI-coated vesicle membrane. Functionally, the coatomer is a cytosolic protein complex that binds to dilysine motifs and reversibly associates with Golgi non-clathrin-coated vesicles, which further mediate biosynthetic protein transport from the ER, via the Golgi up to the trans Golgi network. Coatomer complex is required for budding from Golgi membranes, and is essential for the retrograde Golgi-to-ER transport of dilysine-tagged proteins. The zeta subunit may be involved in regulating the coat assembly and, hence, the rate of biosynthetic protein transport due to its association-dissociation properties with the coatomer complex. In Dictyostelium discoideum (Social amoeba), this protein is Probable coatomer subunit zeta-B (copZb).